The following is a 349-amino-acid chain: Peroxidase C3 (349 aa).

The N-terminal stretch at 1-29 is a signal peptide; sequence MGFSPLISCSAMGALILSCLLLQASNSNA. 4 disulfides stabilise this stretch: Cys40–Cys120, Cys73–Cys78, Cys126–Cys329, and Cys206–Cys238. Residue His71 is the Proton acceptor of the active site. Ca(2+) contacts are provided by Asp72, Val75, Gly77, Asp79, and Ser81. An N-linked (GlcNAc...) asparagine glycan is attached at Asn86. A substrate-binding site is contributed by Pro168. His199 lines the heme b pocket. Thr200 lines the Ca(2+) pocket. N-linked (GlcNAc...) asparagine glycosylation is found at Asn217 and Asn243. 3 residues coordinate Ca(2+): Asp251, Thr254, and Asp259.

This sequence belongs to the peroxidase family. Classical plant (class III) peroxidase subfamily. Requires Ca(2+) as cofactor. Heme b serves as cofactor.

The protein localises to the secreted. The protein resides in the vacuole. It carries out the reaction 2 a phenolic donor + H2O2 = 2 a phenolic radical donor + 2 H2O. Its function is as follows. Removal of H(2)O(2), oxidation of toxic reductants, biosynthesis and degradation of lignin, suberization, auxin catabolism, response to environmental stresses such as wounding, pathogen attack and oxidative stress. These functions might be dependent on each isozyme/isoform in each plant tissue. In Armoracia rusticana (Horseradish), this protein is Peroxidase C3 (PRXC3).